A 181-amino-acid polypeptide reads, in one-letter code: MARRGQQPPPQQAPPAQKNQTGKFNPAEFVKPGLTEEEVLEIKEAFDLFDTDGTQSIDPKELKAAMTSLGFEAKNQTIYQMISDLDTDGSGQIDFAEFLKLMTARISERDSKADIQKVFNLFDSERAGVITLKDLRKVAKELGETMDDSELQEMIDRADSDGDAQVTFEDFYNIMTKKTFA.

Residues 1 to 29 form a disordered region; sequence MARRGQQPPPQQAPPAQKNQTGKFNPAEF. EF-hand domains are found at residues 37-72, 73-108, 110-145, and 146-181; these read EEVL…LGFE, AKNQ…RISE, DSKA…LGET, and MDDS…KTFA. Ca(2+)-binding residues include Asp50, Asp52, Thr54, Ser56, Glu61, Asp86, Asp88, Ser90, Gln92, and Glu97.

This sequence belongs to the centrin family. As to quaternary structure, monomer.

The protein localises to the cytoplasm. It localises to the cytoskeleton. Plays a fundamental role in microtubule organizing center structure and function. Component of the infraciliary lattice (ICL) and the ciliary basal bodies. This is Caltractin ICL1d (Icl1d) from Paramecium tetraurelia.